Consider the following 361-residue polypeptide: Peptide chain release factor 1 (361 aa).

Residue Q235 is modified to N5-methylglutamine.

The protein belongs to the prokaryotic/mitochondrial release factor family. In terms of processing, methylated by PrmC. Methylation increases the termination efficiency of RF1.

It is found in the cytoplasm. Its function is as follows. Peptide chain release factor 1 directs the termination of translation in response to the peptide chain termination codons UAG and UAA. The sequence is that of Peptide chain release factor 1 from Rhodopseudomonas palustris (strain BisB18).